A 228-amino-acid chain; its full sequence is Large ribosomal subunit protein bL25 (228 aa).

Positions 198-228 are disordered; that stretch reads AAIAEAQSAEAAEEKAEAEAEATNEKNDTEE. The span at 209 to 228 shows a compositional bias: basic and acidic residues; sequence AEEKAEAEAEATNEKNDTEE.

Belongs to the bacterial ribosomal protein bL25 family. CTC subfamily. Part of the 50S ribosomal subunit; part of the 5S rRNA/L5/L18/L25 subcomplex. Contacts the 5S rRNA. Binds to the 5S rRNA independently of L5 and L18.

This is one of the proteins that binds to the 5S RNA in the ribosome where it forms part of the central protuberance. This chain is Large ribosomal subunit protein bL25, found in Methylorubrum populi (strain ATCC BAA-705 / NCIMB 13946 / BJ001) (Methylobacterium populi).